Reading from the N-terminus, the 153-residue chain is Probable disulfide formation protein (153 aa).

Residues 4 to 23 form a helical membrane-spanning segment; it reads DTRLYLAWLVALAATLGSLY. Cysteine 33 and cysteine 36 are oxidised to a cystine. 2 helical membrane-spanning segments follow: residues 38 to 57 and 64 to 81; these read AQRI…AFVG and YVLP…FQNL. A disulfide bridge links cysteine 93 with cysteine 101. A helical transmembrane segment spans residues 117-139; it reads RALTIPVLSMIAFALILALLSWP.

It belongs to the DsbB family. BdbC subfamily.

The protein localises to the cell membrane. Functionally, required for disulfide bond formation in some proteins. This Deinococcus radiodurans (strain ATCC 13939 / DSM 20539 / JCM 16871 / CCUG 27074 / LMG 4051 / NBRC 15346 / NCIMB 9279 / VKM B-1422 / R1) protein is Probable disulfide formation protein.